Reading from the N-terminus, the 444-residue chain is Putative cytochrome P450 120 (444 aa).

A heme-binding site is contributed by Cys-391.

The protein belongs to the cytochrome P450 family. The cofactor is heme.

This Synechocystis sp. (strain ATCC 27184 / PCC 6803 / Kazusa) protein is Putative cytochrome P450 120 (cyp120).